The chain runs to 98 residues: NADH-ubiquinone oxidoreductase chain 4L (98 aa).

A run of 3 helical transmembrane segments spans residues T2 to F22, T29 to L49, and I61 to V81.

Belongs to the complex I subunit 4L family. As to quaternary structure, core subunit of respiratory chain NADH dehydrogenase (Complex I) which is composed of 45 different subunits.

The protein localises to the mitochondrion inner membrane. The enzyme catalyses a ubiquinone + NADH + 5 H(+)(in) = a ubiquinol + NAD(+) + 4 H(+)(out). Core subunit of the mitochondrial membrane respiratory chain NADH dehydrogenase (Complex I) which catalyzes electron transfer from NADH through the respiratory chain, using ubiquinone as an electron acceptor. Part of the enzyme membrane arm which is embedded in the lipid bilayer and involved in proton translocation. This is NADH-ubiquinone oxidoreductase chain 4L (MT-ND4L) from Oxymycterus rufus (Red hocicudo).